The following is a 361-amino-acid chain: Chorismate synthase (361 aa).

NADP(+) contacts are provided by Arg48 and Arg54. FMN is bound by residues 125 to 127, 238 to 239, Gly278, 293 to 297, and Arg319; these read RSS, NA, and KPTSS.

This sequence belongs to the chorismate synthase family. As to quaternary structure, homotetramer. FMNH2 is required as a cofactor.

It catalyses the reaction 5-O-(1-carboxyvinyl)-3-phosphoshikimate = chorismate + phosphate. The protein operates within metabolic intermediate biosynthesis; chorismate biosynthesis; chorismate from D-erythrose 4-phosphate and phosphoenolpyruvate: step 7/7. Catalyzes the anti-1,4-elimination of the C-3 phosphate and the C-6 proR hydrogen from 5-enolpyruvylshikimate-3-phosphate (EPSP) to yield chorismate, which is the branch point compound that serves as the starting substrate for the three terminal pathways of aromatic amino acid biosynthesis. This reaction introduces a second double bond into the aromatic ring system. The protein is Chorismate synthase of Methylobacillus flagellatus (strain ATCC 51484 / DSM 6875 / VKM B-1610 / KT).